The chain runs to 198 residues: Proteasome subunit beta 1 (198 aa).

Positions 1–6 (MSGPGA) are cleaved as a propeptide — removed in mature form; by autocatalysis. The active-site Nucleophile is threonine 7.

This sequence belongs to the peptidase T1B family. As to quaternary structure, the 20S proteasome core is composed of 14 alpha and 14 beta subunits that assemble into four stacked heptameric rings, resulting in a barrel-shaped structure. The two inner rings, each composed of seven catalytic beta subunits, are sandwiched by two outer rings, each composed of seven alpha subunits. The catalytic chamber with the active sites is on the inside of the barrel. Has a gated structure, the ends of the cylinder being occluded by the N-termini of the alpha-subunits. Is capped at one or both ends by the proteasome regulatory ATPase, PAN.

It is found in the cytoplasm. It carries out the reaction Cleavage of peptide bonds with very broad specificity.. With respect to regulation, the formation of the proteasomal ATPase PAN-20S proteasome complex, via the docking of the C-termini of PAN into the intersubunit pockets in the alpha-rings, triggers opening of the gate for substrate entry. Interconversion between the open-gate and close-gate conformations leads to a dynamic regulation of the 20S proteasome proteolysis activity. In terms of biological role, component of the proteasome core, a large protease complex with broad specificity involved in protein degradation. The polypeptide is Proteasome subunit beta 1 (Ignicoccus hospitalis (strain KIN4/I / DSM 18386 / JCM 14125)).